Here is a 90-residue protein sequence, read N- to C-terminus: Small ribosomal subunit protein uS15 (90 aa).

This sequence belongs to the universal ribosomal protein uS15 family. As to quaternary structure, part of the 30S ribosomal subunit. Forms a bridge to the 50S subunit in the 70S ribosome, contacting the 23S rRNA.

Its function is as follows. One of the primary rRNA binding proteins, it binds directly to 16S rRNA where it helps nucleate assembly of the platform of the 30S subunit by binding and bridging several RNA helices of the 16S rRNA. Forms an intersubunit bridge (bridge B4) with the 23S rRNA of the 50S subunit in the ribosome. The polypeptide is Small ribosomal subunit protein uS15 (Herpetosiphon aurantiacus (strain ATCC 23779 / DSM 785 / 114-95)).